Here is a 277-residue protein sequence, read N- to C-terminus: Ribosomal protein L11 methyltransferase (277 aa).

4 residues coordinate S-adenosyl-L-methionine: Thr-130, Gly-151, Asp-172, and Asn-213.

Belongs to the methyltransferase superfamily. PrmA family.

It localises to the cytoplasm. The enzyme catalyses L-lysyl-[protein] + 3 S-adenosyl-L-methionine = N(6),N(6),N(6)-trimethyl-L-lysyl-[protein] + 3 S-adenosyl-L-homocysteine + 3 H(+). Methylates ribosomal protein L11. This chain is Ribosomal protein L11 methyltransferase, found in Campylobacter concisus (strain 13826).